Reading from the N-terminus, the 353-residue chain is Protein MGF 360-13L (353 aa).

Belongs to the asfivirus MGF 360 family.

Plays a role in virus cell tropism, and may be required for efficient virus replication in macrophages. The polypeptide is Protein MGF 360-13L (African swine fever virus (isolate Pig/Kenya/KEN-50/1950) (ASFV)).